A 471-amino-acid chain; its full sequence is TLNFTGTWYPITLLFILITAVHGQQIQINNIDTNHGYLLFSDKPVQIPSSFEHHSLKINLTEIDIVVDYFEQRLRTDYHAPQINFLYNKIKRELARITLKHRNKRGFINIVGSGFKYLFGTLDENDRVEIQKKLEINVHNSVKLHELNDAIRLINDGMQKIQNYENNHTIIDSLLFELMQFTEYIEDLEMAMQLSRLGLFNPKLLNYDKLENVNSQNILNIKTSTWINYNDNQVLIISHIPIYLSLISTIKIIPYPDSNGYQLDYTDTQSYFEKENKVYNTENKEVKNECVTNIIKHLNPICNFKPVHTNEIIKYIEPNTIVTWNLTQTILNQNCQNSINKIKIEGNKMIRVTQCKIEINNINFSETLLEPEIDLTPLYTPLNITKIKIVKHNDIIEMISENNITLYIQMIIVIIALILLYSYLRYVSFKPFMMLYAKLKIRKNQNQNTPQQTEIEEIPFPTLYPSIPAQV.

Residues Asn3, Asn59, Asn167, Asn325, Asn363, Asn383, and Asn403 are each glycosylated (N-linked (GlcNAc...) asparagine).

This chain is Retrovirus-related Env polyprotein from transposon 297 (env), found in Drosophila melanogaster (Fruit fly).